Here is a 517-residue protein sequence, read N- to C-terminus: Aldehyde dehydrogenase X, mitochondrial (517 aa).

A mitochondrion-targeting transit peptide spans 1 to 17 (MLRFLAPRLLSLQGRTA). K51 is modified (N6-acetyllysine). The residue at position 52 (K52) is an N6-acetyllysine; alternate. An N6-succinyllysine; alternate modification is found at K52. An N6-succinyllysine modification is found at K81. Residue 262 to 267 (GSTEVG) participates in NAD(+) binding. E285 (proton acceptor) is an active-site residue. C319 (nucleophile) is an active-site residue. An N6-acetyllysine; alternate mark is found at K364, K383, K399, K414, and K426. Residues K364, K383, K399, K414, and K426 each carry the N6-succinyllysine; alternate modification. K429 is modified (N6-acetyllysine).

Belongs to the aldehyde dehydrogenase family. In terms of assembly, homotetramer.

It localises to the mitochondrion matrix. It carries out the reaction an aldehyde + NAD(+) + H2O = a carboxylate + NADH + 2 H(+). It participates in alcohol metabolism; ethanol degradation; acetate from ethanol: step 2/2. In terms of biological role, ALDHs play a major role in the detoxification of alcohol-derived acetaldehyde. They are involved in the metabolism of corticosteroids, biogenic amines, neurotransmitters, and lipid peroxidation. The chain is Aldehyde dehydrogenase X, mitochondrial (ALDH1B1) from Pongo abelii (Sumatran orangutan).